Reading from the N-terminus, the 741-residue chain is Phosphoribosylformylglycinamidine synthase subunit PurL (741 aa).

The active site involves H54. Y57 and K96 together coordinate ATP. E98 is a Mg(2+) binding site. Residues 99–102 (SHNH) and R121 contribute to the substrate site. The Proton acceptor role is filled by H100. D122 contacts Mg(2+). Q245 lines the substrate pocket. D273 is a Mg(2+) binding site. 317 to 319 (ESQ) provides a ligand contact to substrate. 2 residues coordinate ATP: D500 and G537. N538 is a binding site for Mg(2+). A substrate-binding site is contributed by S540.

Belongs to the FGAMS family. As to quaternary structure, monomer. Part of the FGAM synthase complex composed of 1 PurL, 1 PurQ and 2 PurS subunits.

It localises to the cytoplasm. The enzyme catalyses N(2)-formyl-N(1)-(5-phospho-beta-D-ribosyl)glycinamide + L-glutamine + ATP + H2O = 2-formamido-N(1)-(5-O-phospho-beta-D-ribosyl)acetamidine + L-glutamate + ADP + phosphate + H(+). It participates in purine metabolism; IMP biosynthesis via de novo pathway; 5-amino-1-(5-phospho-D-ribosyl)imidazole from N(2)-formyl-N(1)-(5-phospho-D-ribosyl)glycinamide: step 1/2. Its function is as follows. Part of the phosphoribosylformylglycinamidine synthase complex involved in the purines biosynthetic pathway. Catalyzes the ATP-dependent conversion of formylglycinamide ribonucleotide (FGAR) and glutamine to yield formylglycinamidine ribonucleotide (FGAM) and glutamate. The FGAM synthase complex is composed of three subunits. PurQ produces an ammonia molecule by converting glutamine to glutamate. PurL transfers the ammonia molecule to FGAR to form FGAM in an ATP-dependent manner. PurS interacts with PurQ and PurL and is thought to assist in the transfer of the ammonia molecule from PurQ to PurL. The chain is Phosphoribosylformylglycinamidine synthase subunit PurL from Shouchella clausii (strain KSM-K16) (Alkalihalobacillus clausii).